The following is a 280-amino-acid chain: 3-deoxy-manno-octulosonate cytidylyltransferase (280 aa).

Belongs to the KdsB family.

The protein resides in the cytoplasm. It catalyses the reaction 3-deoxy-alpha-D-manno-oct-2-ulosonate + CTP = CMP-3-deoxy-beta-D-manno-octulosonate + diphosphate. The protein operates within nucleotide-sugar biosynthesis; CMP-3-deoxy-D-manno-octulosonate biosynthesis; CMP-3-deoxy-D-manno-octulosonate from 3-deoxy-D-manno-octulosonate and CTP: step 1/1. Its pathway is bacterial outer membrane biogenesis; lipopolysaccharide biosynthesis. Functionally, activates KDO (a required 8-carbon sugar) for incorporation into bacterial lipopolysaccharide in Gram-negative bacteria. The sequence is that of 3-deoxy-manno-octulosonate cytidylyltransferase from Colwellia psychrerythraea (strain 34H / ATCC BAA-681) (Vibrio psychroerythus).